Here is a 2565-residue protein sequence, read N- to C-terminus: Transformation/transcription domain-associated protein (2565 aa).

Phosphoserine occurs at positions 328, 749, and 775. The interaction with TP53 stretch occupies residues S710–T1087. Positions K745–R760 match the Bipartite nuclear localization signal motif. Residue K1242 forms a Glycyl lysine isopeptide (Lys-Gly) (interchain with G-Cter in SUMO2) linkage. Over residues K1242 to S1253 the composition is skewed to basic and acidic residues. Residues K1242–E1277 form a disordered region. Residues V1391–T1963 form the FAT domain. Position 1766 is an N6-acetyllysine (K1766). The tract at residues K1973 to G1995 is disordered. The segment covering D1975 to A1991 has biased composition (polar residues). Residues M2206–H2529 enclose the PI3K/PI4K catalytic domain. Residues V2212–A2218 are G-loop. A catalytic loop region spans residues H2393–M2401. Residues V2413–T2438 form an activation loop region. The 33-residue stretch at Q2533–L2565 folds into the FATC domain.

This sequence belongs to the PI3/PI4-kinase family. TRA1 subfamily. Interacts with MYC, E2F1 and E2F4 transcription factors. Interacts directly with p53/TP53. Interacts with GCN5L2. Component of various HAT complexes. Component of the PCAF complex, at least composed of TADA2L/ADA2, SUPT3H, TADA3L/ADA3, TAF5L/PAF65-beta, TAF6L/PAF65-alpha, TAF10/TAFII30, TAF12/TAFII20, TAF9/TAFII31 and TRRAP. Component of the TFTC-HAT complex, at least composed of TAF5L, TAF6L, TADA3L, SUPT3H/SPT3, TAF2/TAFII150, TAF4/TAFII135, TAF5/TAFII100, GCN5L2/GCN5, TAF10 and TRRAP. Component of the NuA4 histone acetyltransferase complex which contains the catalytic subunit KAT5/TIP60 and the subunits EP400, TRRAP/PAF400, BRD8/SMAP, EPC1, DMAP1/DNMAP1, RUVBL1/TIP49, RUVBL2, ING3, actin, ACTL6A/BAF53A, MORF4L1/MRG15, MORF4L2/MRGX, MRGBP, YEATS4/GAS41, VPS72/YL1 and MEAF6. Component of the STAGA complex, at least composed of SUPT3H, GCN5L2, SUPT7L, TAF5L, TAF6L, TADA3L, TAD1L, TAF10, TAF12, TRRAP and TAF9. The STAGA core complex is associated with a subcomplex required for histone deubiquitination composed of ATXN7L3, ENY2 and USP22. Component of the BAF53 complex, at least composed of BAF53A, RUVBL1, SMARCA4/BRG1, and TRRAP, which preferentially acetylates histone H4 (and H2A) within nucleosomes. Interacts with NPAT. Interaction with TELO2 and TTI1. Component of a SWR1-like complex. Expressed in the cochlea.

It localises to the nucleus. Adapter protein, which is found in various multiprotein chromatin complexes with histone acetyltransferase activity (HAT), which gives a specific tag for epigenetic transcription activation. Component of the NuA4 histone acetyltransferase complex which is responsible for acetylation of nucleosomal histones H4 and H2A. Plays a central role in MYC transcription activation, and also participates in cell transformation by MYC. Required for p53/TP53-, E2F1- and E2F4-mediated transcription activation. Probably acts by linking transcription factors such as E1A, MYC or E2F1 to HAT complexes such as STAGA thereby allowing transcription activation. Probably not required in the steps following histone acetylation in processes of transcription activation. May be required for the mitotic checkpoint and normal cell cycle progression. Component of a SWR1-like complex that specifically mediates the removal of histone H2A.Z/H2AZ1 from the nucleosome. May play a role in the formation and maintenance of the auditory system. This Mus musculus (Mouse) protein is Transformation/transcription domain-associated protein (Trrap).